Here is a 702-residue protein sequence, read N- to C-terminus: Elongation factor G (702 aa).

Residues 9–292 enclose the tr-type G domain; sequence DRTRNIGIMA…AVVDYLPSPL (284 aa). GTP is bound by residues 18-25, 91-95, and 145-148; these read AHIDAGKT, DTPGH, and NKMD.

The protein belongs to the TRAFAC class translation factor GTPase superfamily. Classic translation factor GTPase family. EF-G/EF-2 subfamily.

The protein resides in the cytoplasm. Its function is as follows. Catalyzes the GTP-dependent ribosomal translocation step during translation elongation. During this step, the ribosome changes from the pre-translocational (PRE) to the post-translocational (POST) state as the newly formed A-site-bound peptidyl-tRNA and P-site-bound deacylated tRNA move to the P and E sites, respectively. Catalyzes the coordinated movement of the two tRNA molecules, the mRNA and conformational changes in the ribosome. The chain is Elongation factor G from Oenococcus oeni (strain ATCC BAA-331 / PSU-1).